The following is a 1180-amino-acid chain: Neurexin like receptor 1 (1180 aa).

The signal sequence occupies residues 1 to 20 (MSGLCLVLLLSIFAVSQSSG). Residues 21-1108 (ECSDVSFSSV…SQNKQDLVSK (1088 aa)) lie on the Extracellular side of the membrane. The Laminin G-like 1 domain maps to 124-290 (PITAFDDSSY…LSPNEVHNQC (167 aa)). Asn229 carries an N-linked (GlcNAc...) asparagine glycan. Cys267 and Cys290 are joined by a disulfide. 4 N-linked (GlcNAc...) asparagine glycosylation sites follow: Asn302, Asn336, Asn355, and Asn436. Residues 444–481 (FQEKCLPNPCENGGGCVQSALDDYVCNCKEGYKGKNCH) form the EGF-like 1 domain. Disulfide bonds link Cys448/Cys459, Cys453/Cys469, and Cys471/Cys480. Residues Asn522 and Asn636 are each glycosylated (N-linked (GlcNAc...) asparagine). One can recognise a Laminin G-like 2 domain in the interval 695-863 (TFDPVTFSNR…GVAIGDDGYC (169 aa)). Residues 859-896 (DDGYCRPDLCQNGGQCVDKYDGYVCDCSMTPFGGSDCT) form the EGF-like 2 domain. Disulfide bonds link Cys863/Cys874, Cys868/Cys883, and Cys885/Cys895. N-linked (GlcNAc...) asparagine glycosylation is found at Asn933, Asn949, Asn978, Asn997, Asn1011, and Asn1052. A helical transmembrane segment spans residues 1109–1129 (AIIGGGILALSLFILCMSSLI). Topologically, residues 1130-1180 (CYMRSRPEGVYKTNETGENCSPSRSEEPLVHNTTSNNNNNPTYASNKEYFC) are cytoplasmic. Polar residues predominate over residues 1142–1152 (TNETGENCSPS). A disordered region spans residues 1142-1180 (TNETGENCSPSRSEEPLVHNTTSNNNNNPTYASNKEYFC). Over residues 1161 to 1171 (NTTSNNNNNPT) the composition is skewed to low complexity.

Belongs to the neurexin family. As to quaternary structure, interacts (via the intracellular domain) with F-actin; the interaction is required for anchoring F-actin at the membrane for gap junction formation. As to expression, highly expressed in pharyngeal g1 and g2 gland cells, pharyngeal muscle cells and the unilateral GABAergic RIS interneuron (at protein level). Expressed in pm5 pharyngeal muscle cells and the nerve ring.

The protein localises to the cell membrane. Its subcellular location is the cell junction. It localises to the gap junction. Required for gap junction formation, playing a role in anchoring the cytoskeletal component F-actin to the membrane of adjacent cells and thus facilitating the formation of gap junction channels in embryonic cells, muscle cells and neuronal cells. Plays a role in maintaining gap junction activity to promote pharyngeal muscle contraction. This chain is Neurexin like receptor 1, found in Caenorhabditis elegans.